Reading from the N-terminus, the 207-residue chain is Urease accessory protein UreG (207 aa).

12 to 19 (GPVGAGKT) contributes to the GTP binding site.

Belongs to the SIMIBI class G3E GTPase family. UreG subfamily. As to quaternary structure, homodimer. UreD, UreF and UreG form a complex that acts as a GTP-hydrolysis-dependent molecular chaperone, activating the urease apoprotein by helping to assemble the nickel containing metallocenter of UreC. The UreE protein probably delivers the nickel.

The protein localises to the cytoplasm. Its function is as follows. Facilitates the functional incorporation of the urease nickel metallocenter. This process requires GTP hydrolysis, probably effectuated by UreG. The sequence is that of Urease accessory protein UreG from Cereibacter sphaeroides (strain KD131 / KCTC 12085) (Rhodobacter sphaeroides).